The primary structure comprises 372 residues: Cobalt-precorrin-5B C(1)-methyltransferase (372 aa).

This sequence belongs to the CbiD family.

The enzyme catalyses Co-precorrin-5B + S-adenosyl-L-methionine = Co-precorrin-6A + S-adenosyl-L-homocysteine. It participates in cofactor biosynthesis; adenosylcobalamin biosynthesis; cob(II)yrinate a,c-diamide from sirohydrochlorin (anaerobic route): step 6/10. Catalyzes the methylation of C-1 in cobalt-precorrin-5B to form cobalt-precorrin-6A. The protein is Cobalt-precorrin-5B C(1)-methyltransferase of Prochlorococcus marinus subsp. pastoris (strain CCMP1986 / NIES-2087 / MED4).